Here is a 384-residue protein sequence, read N- to C-terminus: 1-deoxy-D-xylulose 5-phosphate reductoisomerase (384 aa).

The NADPH site is built by T10, G11, S12, I13, G36, K37, N38, and N121. Residue K122 coordinates 1-deoxy-D-xylulose 5-phosphate. Residue E123 participates in NADPH binding. Residue D147 coordinates Mn(2+). Residues S148, E149, S173, and H196 each contribute to the 1-deoxy-D-xylulose 5-phosphate site. Mn(2+) is bound at residue E149. G202 contributes to the NADPH binding site. The 1-deoxy-D-xylulose 5-phosphate site is built by S209, N214, K215, and E218. E218 provides a ligand contact to Mn(2+).

This sequence belongs to the DXR family. The cofactor is Mg(2+). Requires Mn(2+) as cofactor.

The enzyme catalyses 2-C-methyl-D-erythritol 4-phosphate + NADP(+) = 1-deoxy-D-xylulose 5-phosphate + NADPH + H(+). The protein operates within isoprenoid biosynthesis; isopentenyl diphosphate biosynthesis via DXP pathway; isopentenyl diphosphate from 1-deoxy-D-xylulose 5-phosphate: step 1/6. Catalyzes the NADPH-dependent rearrangement and reduction of 1-deoxy-D-xylulose-5-phosphate (DXP) to 2-C-methyl-D-erythritol 4-phosphate (MEP). In Exiguobacterium sibiricum (strain DSM 17290 / CCUG 55495 / CIP 109462 / JCM 13490 / 255-15), this protein is 1-deoxy-D-xylulose 5-phosphate reductoisomerase.